Consider the following 520-residue polypeptide: Rho GTPase-activating protein gacV (520 aa).

Residues 8 to 28 (NIKTYYIIGIITLIFIVSAVI) form a helical membrane-spanning segment. The stretch at 28 to 192 (IKNQLSSSNQ…EEQEEEQFSM (165 aa)) forms a coiled coil. Disordered regions lie at residues 33–73 (SSSN…KLDN), 121–189 (EEKQ…EEEQ), 348–373 (NNNN…NNNE), and 489–520 (LQEQ…DQEE). Over residues 52 to 62 (SKGRGNKKGKK) the composition is skewed to basic residues. Residues 63–73 (PEKIQEKKLDN) are compositionally biased toward basic and acidic residues. The span at 140 to 189 (QEEEEEEEEQQEIEEDEEEEEGQEQEEEEEQQEIEEGEEEQQEEEQEEEQ) shows a compositional bias: acidic residues. Residues 195-472 (VSIERLMDFQ…ILLKQKKEIA (278 aa)) form the Rho-GAP domain. Low complexity predominate over residues 348-372 (NNNNNNNNNNNNNNNNNNDNNNNNN). Residues 480–520 (YFKDEYSKKLQEQNDQEEDNQEEEKDNQEEDEDEEDKDQEE) adopt a coiled-coil conformation. The segment covering 493–520 (NDQEEDNQEEEKDNQEEDEDEEDKDQEE) has biased composition (acidic residues).

It is found in the membrane. Functionally, rho GTPase-activating protein involved in the signal transduction pathway. This Dictyostelium discoideum (Social amoeba) protein is Rho GTPase-activating protein gacV (gacV).